We begin with the raw amino-acid sequence, 585 residues long: Efflux pump dotC (585 aa).

The segment covering Met-1 to Glu-34 has biased composition (basic and acidic residues). A disordered region spans residues Met-1–Leu-45. Residue Asn-10 is glycosylated (N-linked (GlcNAc...) asparagine). Acidic residues predominate over residues Glu-35–Ala-44. The chain crosses the membrane as a helical span at residues Ser-51–Leu-71. Asn-91 carries an N-linked (GlcNAc...) asparagine glycan. 13 helical membrane-spanning segments follow: residues Ala-94–Trp-114, Ala-132–Thr-152, Gly-158–Leu-178, Gly-186–Phe-206, Trp-214–Leu-234, Phe-247–Phe-267, Ser-280–Val-300, Ala-323–Leu-343, Pro-353–Ala-373, Leu-385–Phe-405, Leu-414–Val-434, Thr-449–Tyr-471, and Ser-524–Val-544. The interval Lys-564–Ser-585 is disordered.

The protein belongs to the major facilitator superfamily. TCR/Tet family.

Its subcellular location is the cell membrane. The protein localises to the vacuole membrane. Its function is as follows. Efflux pump; part of the gene cluster that mediates the biosynthesis of dothistromin (DOTH), a polyketide toxin very similar in structure to the aflatoxin precursor, versicolorin B. One function of dotC may be to transport early-stage dothistromin biosynthetic intermediates from the cytoplasm into vacuoles, thereby affecting the rate of dothistromin production. This chain is Efflux pump dotC, found in Dothistroma septosporum (Red band needle blight fungus).